A 240-amino-acid chain; its full sequence is MLTRKQQELLLFIHERMKESGVPPSFDEMKDALDLASKSGIHRLITALEERGFIRRLPNRARALEVIKLPEAYSPSLQPRRGFSPSVIEGSLGKPQPVQPPAPAKPANDENNSAVSVPVMGRIAAGVPISAIQNNTHDITVPADMLGSGEHYALEVKGDSMIDAGIFDGDTVIIRNSTTANPGDIVVALVDDEEATLKRFRRKGASIALEAANPAYETRIFGPDRVKVQGKLVGLIRRYH.

Residues 26-46 (FDEMKDALDLASKSGIHRLIT) constitute a DNA-binding region (H-T-H motif). Positions 78–113 (QPRRGFSPSVIEGSLGKPQPVQPPAPAKPANDENNS) are disordered. Catalysis depends on for autocatalytic cleavage activity residues S160 and K198.

Belongs to the peptidase S24 family. Homodimer.

The catalysed reaction is Hydrolysis of Ala-|-Gly bond in repressor LexA.. Its function is as follows. Represses a number of genes involved in the response to DNA damage (SOS response), including recA and lexA. In the presence of single-stranded DNA, RecA interacts with LexA causing an autocatalytic cleavage which disrupts the DNA-binding part of LexA, leading to derepression of the SOS regulon and eventually DNA repair. The protein is LexA repressor of Rhizobium rhizogenes (strain K84 / ATCC BAA-868) (Agrobacterium radiobacter).